Here is a 567-residue protein sequence, read N- to C-terminus: Probable transport protein (567 aa).

A compositionally biased stretch (basic and acidic residues) spans 1-30 (MSDRVEVNERRSDSVSEKEPARDDARKDVT). A disordered region spans residues 1 to 38 (MSDRVEVNERRSDSVSEKEPARDDARKDVTDDQEDAPP). The Cytoplasmic portion of the chain corresponds to 1-46 (MSDRVEVNERRSDSVSEKEPARDDARKDVTDDQEDAPPFMTANNAR). A helical transmembrane segment spans residues 47 to 67 (VMLVQAIGGSLNGYSIGFVGV). Over 68 to 160 (YSTLFGYSTN…PSGYSSSESG (93 aa)) the chain is Extracellular. A helical transmembrane segment spans residues 161 to 181 (IFAGSMIAGCLIGSVFAGPLA). Topologically, residues 182–189 (SKIGARLS) are cytoplasmic. The helical transmembrane segment at 190–210 (FLLVGLVGVVASVMYHASCAA) threads the bilayer. The Extracellular segment spans residues 211 to 212 (DE). The helical transmembrane segment at 213 to 233 (FWVLIVGRFVIGLFLGVICVA) threads the bilayer. Residues 234-249 (CPVYTDQNAHPKWKRT) lie on the Cytoplasmic side of the membrane. A helical transmembrane segment spans residues 250–270 (IGVMFQVFTTLGIFVAALMGL). Residues 271–289 (ALGQSIRFDHDGDQKVMAR) are Extracellular-facing. A helical membrane pass occupies residues 290-310 (MQGLCVFSTLFSLLTVVLGIV). At 311-341 (TRESRAKFDGGEEGRAELNPSEYGYVEMIPR) the chain is on the cytoplasmic side. A helical transmembrane segment spans residues 342-362 (LLMGCVMAGTLQLTGINAVMN). The Extracellular portion of the chain corresponds to 363–366 (YAPT). A helical transmembrane segment spans residues 367–387 (IMGSLGLAPLVGNFVVMLWNF). Residues 388–404 (VTTLASIPLSYVFTMRH) lie on the Cytoplasmic side of the membrane. Residues 405-425 (VFLFGSIFTSCMCLFMCGIPV) form a helical membrane-spanning segment. At 426-437 (YPGVSKKLEAKN) the chain is on the extracellular side. Residues 438–458 (GVAITGILLFILGFEVCVGPC) traverse the membrane as a helical segment. The Cytoplasmic segment spans residues 459–480 (YYVLTQDMFPPSFRPRGASFTQ). Residues 481–501 (VAQFIFNLIINVCYPIATESI) form a helical membrane-spanning segment. At 502–514 (SGGPSGNQDKGQA) the chain is on the extracellular side. A helical transmembrane segment spans residues 515–535 (VAFIFFGGLGLICFVIQVFFL). The Cytoplasmic portion of the chain corresponds to 536 to 567 (HPWDEERDGKKVVAPAIGKKELSEESIGNRAE).

Belongs to the major facilitator superfamily. Sugar transporter (TC 2.A.1.1) family.

It is found in the membrane. Its function is as follows. Probable membrane transport protein. This Leishmania enriettii protein is Probable transport protein (PRO-1).